A 117-amino-acid polypeptide reads, in one-letter code: Large ribosomal subunit protein bL20 (117 aa).

This sequence belongs to the bacterial ribosomal protein bL20 family.

In terms of biological role, binds directly to 23S ribosomal RNA and is necessary for the in vitro assembly process of the 50S ribosomal subunit. It is not involved in the protein synthesizing functions of that subunit. This is Large ribosomal subunit protein bL20 from Geotalea uraniireducens (strain Rf4) (Geobacter uraniireducens).